The primary structure comprises 346 residues: Magnesium-protoporphyrin IX monomethyl ester [oxidative] cyclase (346 aa).

This sequence belongs to the AcsF family. Fe cation is required as a cofactor.

The catalysed reaction is Mg-protoporphyrin IX 13-monomethyl ester + 3 NADPH + 3 O2 + 2 H(+) = 3,8-divinyl protochlorophyllide a + 3 NADP(+) + 5 H2O. Its pathway is porphyrin-containing compound metabolism; chlorophyll biosynthesis (light-independent). Its function is as follows. Catalyzes the formation of the isocyclic ring in chlorophyll biosynthesis. Mediates the cyclase reaction, which results in the formation of divinylprotochlorophyllide (Pchlide) characteristic of all chlorophylls from magnesium-protoporphyrin IX 13-monomethyl ester (MgPMME). The polypeptide is Magnesium-protoporphyrin IX monomethyl ester [oxidative] cyclase (Gloeobacter violaceus (strain ATCC 29082 / PCC 7421)).